The following is a 298-amino-acid chain: MMPIPVNPTNASIQPQSLYDAWADLAWRAMLTEVNLSPKPGLVDRLNCGAHKDMALADFHRSAEAIRHWLPRFMEYGASCTRLPPESVLAGLRPLGMACEAAMFRATAGVNTHKGSIFSLGLLCAAIGRLYQLRQPIAAETLCATAADFCRGLTTRELRQNNLQLTAGQRLYQQLGLTGARGEAEAGYPLVIRHALPHYRALLAQGRDPELALLDTLLLLMSLNGDTNVASRGGADGLRWLQQQAAVLLHQGGIRTPDDLVYLHRFDQQCIERNLSPGGSADLLIVTWFLAQISQVNH.

The protein belongs to the CitG/MdcB family.

The enzyme catalyses 3'-dephospho-CoA + ATP = 2'-(5''-triphospho-alpha-D-ribosyl)-3'-dephospho-CoA + adenine. In Salmonella typhi, this protein is Probable 2-(5''-triphosphoribosyl)-3'-dephosphocoenzyme-A synthase 2.